A 175-amino-acid polypeptide reads, in one-letter code: Protein UPS1, mitochondrial (175 aa).

Residues 1-80 (MVLLHKSTHI…RGITETWIIE (80 aa)) are required for mitochondrial targeting. Residues 2 to 172 (VLLHKSTHIF…VIQKLEEARN (171 aa)) form the PRELI/MSF1 domain. Positions 26, 58, 148, and 152 each coordinate a 1,2-diacyl-sn-glycero-3-phosphate.

This sequence belongs to the slowmo family. In terms of assembly, interacts with MDM35. Found associated with a 170 kDa complex.

The protein resides in the mitochondrion inner membrane. The protein localises to the mitochondrion intermembrane space. Required for maintenance of normal mitochondrial morphology. Required for PCP1-dependent processing of MGM1. The UPS1:MDM35 complex mediates the transfer of phosphatidic acid (PA) between liposomes and probably functions as a PA transporter across the mitochondrion intermembrane space. Phosphatidic acid release requires dissociation of the UPS1:MDM35 complex. Phosphatidic acid import is required for cardiolipin (CL) synthesis in the mitochondrial inner membrane. With UPS2, controls the level of cardiolipin in mitochondria. Cardiolipin is a unique phospholipid with four fatty acid chains and is present mainly in the mitochondrial inner membrane where it stabilizes the electron transport chain supercomplex between complexes III and IV through direct interaction of their subunits. In Saccharomyces cerevisiae (strain ATCC 204508 / S288c) (Baker's yeast), this protein is Protein UPS1, mitochondrial (UPS1).